A 326-amino-acid polypeptide reads, in one-letter code: Probable iron chelatin transport system permease protein jhp_0822 (326 aa).

Transmembrane regions (helical) follow at residues Ile-7 to Ser-27, Ile-64 to Leu-84, Pro-91 to Val-111, Ser-113 to Met-133, Leu-142 to Ile-162, Phe-164 to Leu-184, Tyr-187 to Leu-207, Val-241 to Pro-261, Leu-275 to Lys-295, and Asp-301 to Phe-321.

This sequence belongs to the binding-protein-dependent transport system permease family. FecCD subfamily.

The protein localises to the cell inner membrane. In terms of biological role, part of a binding-protein-dependent transport system for an iron chelatin; probably responsible for the translocation of the substrate across the membrane. The sequence is that of Probable iron chelatin transport system permease protein jhp_0822 from Helicobacter pylori (strain J99 / ATCC 700824) (Campylobacter pylori J99).